Here is a 306-residue protein sequence, read N- to C-terminus: tRNA pseudouridine synthase B (306 aa).

Residue Asp48 is the Nucleophile of the active site.

Belongs to the pseudouridine synthase TruB family. Type 1 subfamily.

The catalysed reaction is uridine(55) in tRNA = pseudouridine(55) in tRNA. Responsible for synthesis of pseudouridine from uracil-55 in the psi GC loop of transfer RNAs. The protein is tRNA pseudouridine synthase B of Chromobacterium violaceum (strain ATCC 12472 / DSM 30191 / JCM 1249 / CCUG 213 / NBRC 12614 / NCIMB 9131 / NCTC 9757 / MK).